The chain runs to 243 residues: Max-interacting protein 1 (243 aa).

Positions 76–128 constitute a bHLH domain; that stretch reads HYRSTHNELEKNRRAHLRLCLERLKTLIPLGPECSRHTTLGLLNKAKAHIKKL. Residues 164–235 form a disordered region; the sequence is EAERIRTDSM…TASDEGYSSC (72 aa). Positions 188–198 are enriched in acidic residues; sequence DQEEMEVDVES. Positions 222-235 are enriched in polar residues; sequence SLQSTASDEGYSSC.

As to quaternary structure, efficient DNA binding requires dimerization with another bHLH protein. Binds DNA as a heterodimer with MAX.

It is found in the nucleus. Its function is as follows. Transcriptional repressor. MXI1 binds with MAX to form a sequence-specific DNA-binding protein complex which recognizes the core sequence 5'-CAC[GA]TG-3'. MXI1 thus antagonizes MYC transcriptional activity by competing for MAX. This Danio rerio (Zebrafish) protein is Max-interacting protein 1 (mxi1).